Consider the following 277-residue polypeptide: Hemin import ATP-binding protein HmuV (277 aa).

The 241-residue stretch at 19–259 (VEVADLNYSV…AIIEEAFGHR (241 aa)) folds into the ABC transporter domain. ATP is bound at residue 51 to 58 (GRNGAGKS).

The protein belongs to the ABC transporter superfamily. Heme (hemin) importer (TC 3.A.1.14.5) family. In terms of assembly, the complex is composed of two ATP-binding proteins (HmuV), two transmembrane proteins (HmuU) and a solute-binding protein (HmuT).

It localises to the cell membrane. In terms of biological role, part of the ABC transporter complex HmuTUV involved in hemin import. Responsible for energy coupling to the transport system. The chain is Hemin import ATP-binding protein HmuV from Deinococcus geothermalis (strain DSM 11300 / CIP 105573 / AG-3a).